An 87-amino-acid polypeptide reads, in one-letter code: Putative regulatory protein CHY_1489 (87 aa).

The protein belongs to the RemA family.

The polypeptide is Putative regulatory protein CHY_1489 (Carboxydothermus hydrogenoformans (strain ATCC BAA-161 / DSM 6008 / Z-2901)).